The sequence spans 215 residues: tRNA (guanine-N(7)-)-methyltransferase (215 aa).

Residues Glu44, Glu69, Asp96, and Asp118 each coordinate S-adenosyl-L-methionine. The active site involves Asp118. Residues Lys122, Asp154, and Thr192 to Glu195 contribute to the substrate site.

It belongs to the class I-like SAM-binding methyltransferase superfamily. TrmB family.

The catalysed reaction is guanosine(46) in tRNA + S-adenosyl-L-methionine = N(7)-methylguanosine(46) in tRNA + S-adenosyl-L-homocysteine. It functions in the pathway tRNA modification; N(7)-methylguanine-tRNA biosynthesis. Catalyzes the formation of N(7)-methylguanine at position 46 (m7G46) in tRNA. This Levilactobacillus brevis (strain ATCC 367 / BCRC 12310 / CIP 105137 / JCM 1170 / LMG 11437 / NCIMB 947 / NCTC 947) (Lactobacillus brevis) protein is tRNA (guanine-N(7)-)-methyltransferase.